The following is a 705-amino-acid chain: Polyribonucleotide nucleotidyltransferase (705 aa).

Residues Asp487 and Asp493 each contribute to the Mg(2+) site. The 60-residue stretch at 554-613 (PKILTMKINPDKIRDVIGPSGKQINKIIEDTGVKIDIEQDGTIFISSTEEDMNQKAKKII) folds into the KH domain. The 69-residue stretch at 623-691 (GQLYLGKVKR…KQGRVNLSRK (69 aa)) folds into the S1 motif domain.

The protein belongs to the polyribonucleotide nucleotidyltransferase family. It depends on Mg(2+) as a cofactor.

The protein resides in the cytoplasm. The catalysed reaction is RNA(n+1) + phosphate = RNA(n) + a ribonucleoside 5'-diphosphate. Its function is as follows. Involved in mRNA degradation. Catalyzes the phosphorolysis of single-stranded polyribonucleotides processively in the 3'- to 5'-direction. In Bacillus pumilus (strain SAFR-032), this protein is Polyribonucleotide nucleotidyltransferase.